We begin with the raw amino-acid sequence, 122 residues long: C-C motif chemokine 9 (122 aa).

The N-terminal stretch at 1–21 is a signal peptide; the sequence is MKPFHTALSFLILTTALGIWA. 3 disulfide bridges follow: cysteine 57–cysteine 80, cysteine 58–cysteine 96, and cysteine 67–cysteine 107.

This sequence belongs to the intercrine beta (chemokine CC) family. The N-terminal is proteolytically cleaved by proteases associated with inflammatory responses. The processed forms CCL9(29-101), CCL9(30-101) and CCL9(31-101) exhibit increase in CCR1-mediated signaling and chemotaxis assays in vitro. Expressed mainly in the liver, lung, and the thymus, although some expression has been detected in a wide variety of tissues except brain.

It is found in the secreted. In terms of biological role, monokine with inflammatory, pyrogenic and chemokinetic properties. Circulates at high concentrations in the blood of healthy animals. Binding to a high-affinity receptor activates calcium release in neutrophils. It also inhibits colony formation of bone marrow myeloid immature progenitors. This is C-C motif chemokine 9 (Ccl9) from Mus musculus (Mouse).